A 161-amino-acid chain; its full sequence is 2-C-methyl-D-erythritol 2,4-cyclodiphosphate synthase (161 aa).

2 residues coordinate a divalent metal cation: Asp-10 and His-12. 4-CDP-2-C-methyl-D-erythritol 2-phosphate-binding positions include 10 to 12 (DVH) and 36 to 37 (HS). His-44 contributes to the a divalent metal cation binding site. Residues 58–60 (DIG), 63–67 (FPDTD), 134–137 (TTTE), Phe-141, and Arg-144 contribute to the 4-CDP-2-C-methyl-D-erythritol 2-phosphate site.

The protein belongs to the IspF family. Homotrimer. A divalent metal cation serves as cofactor.

The catalysed reaction is 4-CDP-2-C-methyl-D-erythritol 2-phosphate = 2-C-methyl-D-erythritol 2,4-cyclic diphosphate + CMP. It participates in isoprenoid biosynthesis; isopentenyl diphosphate biosynthesis via DXP pathway; isopentenyl diphosphate from 1-deoxy-D-xylulose 5-phosphate: step 4/6. Involved in the biosynthesis of isopentenyl diphosphate (IPP) and dimethylallyl diphosphate (DMAPP), two major building blocks of isoprenoid compounds. Catalyzes the conversion of 4-diphosphocytidyl-2-C-methyl-D-erythritol 2-phosphate (CDP-ME2P) to 2-C-methyl-D-erythritol 2,4-cyclodiphosphate (ME-CPP) with a corresponding release of cytidine 5-monophosphate (CMP). The polypeptide is 2-C-methyl-D-erythritol 2,4-cyclodiphosphate synthase (Shewanella putrefaciens (strain CN-32 / ATCC BAA-453)).